The chain runs to 239 residues: Putative zinc finger protein 132L (239 aa).

A disordered region spans residues 20 to 40; the sequence is DASLSTKSPKREPSQEKEIKK. Over residues 28–40 the composition is skewed to basic and acidic residues; that stretch reads PKREPSQEKEIKK. 2 C3H1-type zinc fingers span residues 44–68 and 81–106; these read IKKNKPCKYEEECKRSDCVFLHPGE and RRKTRMCKYVKKCNKGKNCPFAHDES. Positions 128–151 are disordered; that stretch reads PGECKFSHPPPPPPSPPSPPPKEE. Residues 135-147 show a composition bias toward pro residues; sequence HPPPPPPSPPSPP.

The polypeptide is Putative zinc finger protein 132L (Acheta domesticus (House cricket)).